The primary structure comprises 362 residues: Adenosine deaminase (362 aa).

Zn(2+) contacts are provided by H19 and H21. 3 residues coordinate substrate: H21, D23, and G181. A Zn(2+)-binding site is contributed by H208. E211 (proton donor) is an active-site residue. D300 serves as a coordination point for Zn(2+).

It belongs to the metallo-dependent hydrolases superfamily. Adenosine and AMP deaminases family. Adenosine deaminase subfamily. It depends on Zn(2+) as a cofactor.

The catalysed reaction is adenosine + H2O + H(+) = inosine + NH4(+). It catalyses the reaction 2'-deoxyadenosine + H2O + H(+) = 2'-deoxyinosine + NH4(+). In terms of biological role, catalyzes the hydrolytic deamination of adenosine and 2-deoxyadenosine. This chain is Adenosine deaminase, found in Mycolicibacterium vanbaalenii (strain DSM 7251 / JCM 13017 / BCRC 16820 / KCTC 9966 / NRRL B-24157 / PYR-1) (Mycobacterium vanbaalenii).